The sequence spans 510 residues: 2,3-bisphosphoglycerate-independent phosphoglycerate mutase (510 aa).

The Mn(2+) site is built by Asp10 and Ser60. The active-site Phosphoserine intermediate is the Ser60. Substrate-binding positions include His121, 150 to 151, Arg182, Arg188, 252 to 255, and Lys325; these read RD and RPDR. 5 residues coordinate Mn(2+): Asp392, His396, Asp433, His434, and His451.

The protein belongs to the BPG-independent phosphoglycerate mutase family. Mn(2+) serves as cofactor.

Its subcellular location is the plastid. It localises to the chloroplast. It catalyses the reaction (2R)-2-phosphoglycerate = (2R)-3-phosphoglycerate. The protein operates within carbohydrate degradation; glycolysis; pyruvate from D-glyceraldehyde 3-phosphate: step 3/5. Its function is as follows. Catalyzes the interconversion of 2-phosphoglycerate and 3-phosphoglycerate. This chain is 2,3-bisphosphoglycerate-independent phosphoglycerate mutase, found in Gracilaria tenuistipitata var. liui (Red alga).